The chain runs to 117 residues: Ubiquitin-like protein pmt3/smt3 (117 aa).

Residues 1–37 are disordered; the sequence is MSESPSANISDADKSAITPTTGDTSQQDVKPSTEHIN. The span at 17–30 shows a compositional bias: polar residues; it reads ITPTTGDTSQQDVK. The region spanning 35 to 115 is the Ubiquitin-like domain; that stretch reads HINLKVVGQD…LEQLGGCTHL (81 aa). Residue Gly111 forms a Glycyl lysine isopeptide (Gly-Lys) (interchain with K-? in acceptor proteins) linkage. Residues 112–117 constitute a propeptide that is removed on maturation; the sequence is CTHLCL.

Belongs to the ubiquitin family. SUMO subfamily. In terms of assembly, interacts with rfp1.

The protein localises to the nucleus. Its function is as follows. Required for chromosome segregation where it may be involved in microtubule assembly. Loss of smt3 leads to an increase in telomere length. The protein is Ubiquitin-like protein pmt3/smt3 (pmt3) of Schizosaccharomyces pombe (strain 972 / ATCC 24843) (Fission yeast).